Reading from the N-terminus, the 252-residue chain is Putative peptide zinc metalloprotease protein YydH (252 aa).

2 consecutive transmembrane segments (helical) span residues 56–76 (FFYLFLSFTALMFILNYIHLI) and 85–105 (VFYGWKMWIIIVIYFIMNIVL). A Zn(2+)-binding site is contributed by H106. The active site involves E107. A Zn(2+)-binding site is contributed by H110. Helical transmembrane passes span 152-172 (IIVHLFGLFINYLLINTLELI), 181-201 (ALTMAFMLFSSTLLWNLIPIL), and 231-251 (IQIIGIGLAVNSVVHWILYIV).

Belongs to the peptidase M50B family. The cofactor is Zn(2+).

The protein localises to the cell membrane. Its function is as follows. Required for production of the modified peptide YydF. May process the precursor form of YydF to release the active peptide (Potential). The sequence is that of Putative peptide zinc metalloprotease protein YydH (yydH) from Bacillus subtilis (strain 168).